A 418-amino-acid chain; its full sequence is Serine hydroxymethyltransferase (418 aa).

(6S)-5,6,7,8-tetrahydrofolate contacts are provided by residues leucine 121 and 125 to 127 (GHL). Position 230 is an N6-(pyridoxal phosphate)lysine (lysine 230). Position 355–357 (355–357 (SPF)) interacts with (6S)-5,6,7,8-tetrahydrofolate.

It belongs to the SHMT family. As to quaternary structure, homodimer. It depends on pyridoxal 5'-phosphate as a cofactor.

The protein resides in the cytoplasm. The catalysed reaction is (6R)-5,10-methylene-5,6,7,8-tetrahydrofolate + glycine + H2O = (6S)-5,6,7,8-tetrahydrofolate + L-serine. The protein operates within one-carbon metabolism; tetrahydrofolate interconversion. It functions in the pathway amino-acid biosynthesis; glycine biosynthesis; glycine from L-serine: step 1/1. Functionally, catalyzes the reversible interconversion of serine and glycine with tetrahydrofolate (THF) serving as the one-carbon carrier. This reaction serves as the major source of one-carbon groups required for the biosynthesis of purines, thymidylate, methionine, and other important biomolecules. Also exhibits THF-independent aldolase activity toward beta-hydroxyamino acids, producing glycine and aldehydes, via a retro-aldol mechanism. The protein is Serine hydroxymethyltransferase of Streptococcus pyogenes serotype M3 (strain ATCC BAA-595 / MGAS315).